Consider the following 180-residue polypeptide: MSTLRIFDDANPDAPLVATSDAARMAAELKSIGVRFERWESPVAIAADASPEEILEAYRPYLDRLMGETGAGSADVIKMTPDHPQAGTLREKFLNEHIHTEDEVRFFVRGSGHFVMHLDGKVYDAYCTEGDLISVPANTRHWFDAGSTPDFIALRIFTDTSGWVAHFTGDQISARFPVAA.

His97, His99, Glu103, and His141 together coordinate Fe(2+). His97, His99, Glu103, and His141 together coordinate Ni(2+).

It belongs to the acireductone dioxygenase (ARD) family. In terms of assembly, monomer. Requires Fe(2+) as cofactor. It depends on Ni(2+) as a cofactor.

The catalysed reaction is 1,2-dihydroxy-5-(methylsulfanyl)pent-1-en-3-one + O2 = 3-(methylsulfanyl)propanoate + CO + formate + 2 H(+). The enzyme catalyses 1,2-dihydroxy-5-(methylsulfanyl)pent-1-en-3-one + O2 = 4-methylsulfanyl-2-oxobutanoate + formate + 2 H(+). It participates in amino-acid biosynthesis; L-methionine biosynthesis via salvage pathway; L-methionine from S-methyl-5-thio-alpha-D-ribose 1-phosphate: step 5/6. In terms of biological role, catalyzes 2 different reactions between oxygen and the acireductone 1,2-dihydroxy-3-keto-5-methylthiopentene (DHK-MTPene) depending upon the metal bound in the active site. Fe-containing acireductone dioxygenase (Fe-ARD) produces formate and 2-keto-4-methylthiobutyrate (KMTB), the alpha-ketoacid precursor of methionine in the methionine recycle pathway. Ni-containing acireductone dioxygenase (Ni-ARD) produces methylthiopropionate, carbon monoxide and formate, and does not lie on the methionine recycle pathway. The chain is Acireductone dioxygenase from Acidiphilium cryptum (strain JF-5).